A 236-amino-acid polypeptide reads, in one-letter code: Small ribosomal subunit protein uS3 (236 aa).

In terms of domain architecture, KH type-2 spans 39–107; it reads VREFLKKKLA…PVHLNIEEVR (69 aa). A disordered region spans residues 215–236; the sequence is AAQPAEPEKKVRKSGAKNAATS.

It belongs to the universal ribosomal protein uS3 family. Part of the 30S ribosomal subunit. Forms a tight complex with proteins S10 and S14.

Functionally, binds the lower part of the 30S subunit head. Binds mRNA in the 70S ribosome, positioning it for translation. The chain is Small ribosomal subunit protein uS3 from Methylobacillus flagellatus (strain ATCC 51484 / DSM 6875 / VKM B-1610 / KT).